The chain runs to 75 residues: Alpha-amylase inhibitor Paim-2 (75 aa).

2 cysteine pairs are disulfide-bonded: Cys10/Cys26 and Cys44/Cys72.

Its function is as follows. Inhibits mammalian alpha-amylases specifically but has no action on plant and microbial alpha-amylases. This Streptomyces olivaceoviridis (Streptomyces corchorusii) protein is Alpha-amylase inhibitor Paim-2.